The following is a 234-amino-acid chain: Orotidine 5'-phosphate decarboxylase (234 aa).

Substrate is bound by residues Asp-17, Lys-38, 65–74 (DLKLHDIPNT), Thr-122, Arg-184, Gln-193, Gly-213, and Arg-214. Lys-67 (proton donor) is an active-site residue.

This sequence belongs to the OMP decarboxylase family. Type 1 subfamily. As to quaternary structure, homodimer.

It carries out the reaction orotidine 5'-phosphate + H(+) = UMP + CO2. The protein operates within pyrimidine metabolism; UMP biosynthesis via de novo pathway; UMP from orotate: step 2/2. In terms of biological role, catalyzes the decarboxylation of orotidine 5'-monophosphate (OMP) to uridine 5'-monophosphate (UMP). The protein is Orotidine 5'-phosphate decarboxylase of Thermosynechococcus vestitus (strain NIES-2133 / IAM M-273 / BP-1).